A 310-amino-acid polypeptide reads, in one-letter code: tRNA dimethylallyltransferase (310 aa).

An ATP-binding site is contributed by Gly13–Thr20. Thr15–Thr20 contacts substrate. Interaction with substrate tRNA regions lie at residues Asp38–Leu41, Gln162–Arg166, Arg243–Arg248, and Lys276–Arg283.

Belongs to the IPP transferase family. Monomer. Mg(2+) serves as cofactor.

It catalyses the reaction adenosine(37) in tRNA + dimethylallyl diphosphate = N(6)-dimethylallyladenosine(37) in tRNA + diphosphate. Functionally, catalyzes the transfer of a dimethylallyl group onto the adenine at position 37 in tRNAs that read codons beginning with uridine, leading to the formation of N6-(dimethylallyl)adenosine (i(6)A). This Vibrio campbellii (strain ATCC BAA-1116) protein is tRNA dimethylallyltransferase.